We begin with the raw amino-acid sequence, 66 residues long: Scarabaecin (66 aa).

A signal peptide spans 1-26; it reads MKTLTFYTLLLCAALYSNFFDCKAVA. The cysteines at positions 46 and 57 are disulfide-linked.

Its subcellular location is the secreted. Functionally, possesses antifungal activity against phytopathogenic fungi such as P.oryzae, R.solani and B.cinerea but not against phytopathogenic bacteria. Shows weak activity against the insect pathogenic fungus B.bassiana and against S.aureus. Binds chitin. The chain is Scarabaecin from Oryctes rhinoceros (Coconut rhinoceros beetle).